The following is a 461-amino-acid chain: Sensor histidine kinase MctS (461 aa).

The next 2 helical transmembrane spans lie at I7–T27 and F203–L223. H259 bears the Phosphohistidine; by autocatalysis mark. In terms of domain architecture, Histidine kinase spans L360 to A450.

The protein localises to the cell membrane. The enzyme catalyses ATP + protein L-histidine = ADP + protein N-phospho-L-histidine.. Its function is as follows. Member of the two-component regulatory system MctS/MctR, which activates mctP expression. The chain is Sensor histidine kinase MctS from Rhizobium johnstonii (strain DSM 114642 / LMG 32736 / 3841) (Rhizobium leguminosarum bv. viciae).